The sequence spans 46 residues: Light-harvesting protein B-800/850 beta 1 chain (46 aa).

Residues 2–19 lie on the Cytoplasmic side of the membrane; that stretch reads AERSLSGLTEEEAIAVHD. A bacteriochlorophyll contacts are provided by His-18 and His-36. The chain crosses the membrane as a helical span at residues 20 to 42; that stretch reads QFKTTFSAFIILAAVAHVLVWVW. Residues 43–46 are Periplasmic-facing; sequence KPWF.

The protein belongs to the antenna complex beta subunit family. In terms of assembly, the core complex is formed by different alpha and beta chains, binding bacteriochlorophyll molecules, and arranged most probably in tetrameric structures disposed around the reaction center.

The protein resides in the cell inner membrane. Its function is as follows. Antenna complexes are light-harvesting systems, which transfer the excitation energy to the reaction centers. This Magnetospirillum molischianum (Rhodospirillum molischianum) protein is Light-harvesting protein B-800/850 beta 1 chain (B1).